Consider the following 404-residue polypeptide: MNFRPEQQYILEKPGILLSFEQLRINFKHILRHLEHESHVINSTLTTLISQENASMDEKIEKIDSLLSRVSTVKKKMKHLHDCEALFIKQTKSRLLFMNRLQGIRDMESADFLDWSRVRLNRLVADYMMANGYHGAAALLCKDSQLENLVDLGIYKRYQLIHDSILQQELKEVLSWCSEHRAILKKNNSTLELEVRLQRFIELIKSKKLCQAIAFAKAHFGTWANEHPARLQLAAALLAFPEFTNGSPYSLLLSDDRWEYLASLFTSNFTAVHNIPSVPLLHALLAAGLSSLKTPLCYLDANDDNPLALQSQTVKQCPVCTPCLNDLGKALPYAHITQSAIVDSLTGEGLDSDNCPVAFPNGRVYGIQSLISWNEANGTREGFLRDPYSGKEFPFQLLRKVYVV.

In terms of domain architecture, LisH spans 116–148 (SRVRLNRLVADYMMANGYHGAAALLCKDSQLEN). The region spanning 154 to 211 (IYKRYQLIHDSILQQELKEVLSWCSEHRAILKKNNSTLELEVRLQRFIELIKSKKLCQ) is the CTLH domain. The segment at 317–389 (CPVCTPCLND…REGFLRDPYS (73 aa)) adopts an RING-Gid-type zinc-finger fold.

It belongs to the FYV10 family. Identified in the GID/CTLH complex. In the absence of stress, the complex exists as an inactive anticipatory complex (GID(Ant)), composed of Gid1, the E3 ubiquitin-ligase Gid2, Gid5, Gid8, and the RING-like subunit Gid9, awaiting a substrate receptor to form the active E3 ligase complex. When cells are shifted to glucose-containing medium, the substrate receptor Gid4 is induced and becomes part of the complex, named GID(SR4). Additionally, Gid7 transforms the GID(SR4) E3 ligase core into a higher-order supramolecular assembly (Chelator-GID(SR4)). Under osmotic or heat stress, the substrate receptor Gid10 is induced and becomes part of the complex, named GID(SR10).

Its subcellular location is the cytoplasm. The protein resides in the nucleus. The enzyme catalyses S-ubiquitinyl-[E2 ubiquitin-conjugating enzyme]-L-cysteine + [acceptor protein]-L-lysine = [E2 ubiquitin-conjugating enzyme]-L-cysteine + N(6)-ubiquitinyl-[acceptor protein]-L-lysine.. It participates in protein modification; protein ubiquitination. Functionally, component of the GID E3 ligase complex recruiting N termini and catalyzing ubiquitination of proteins targeted for degradation. GID E3 is regulated through assembly with interchangeable N-degron-binding substrate receptors induced by distinct environmental perturbations. Required for the adaptation to the presence of glucose in the growth medium; mediates in association with the substrate receptor VID24/GID4 the degradation of enzymes involved in gluconeogenesis when cells are shifted to glucose-containing medium. This Schizosaccharomyces pombe (strain 972 / ATCC 24843) (Fission yeast) protein is GID complex subunit 9 (gid9).